Reading from the N-terminus, the 717-residue chain is DNA ligase (717 aa).

NAD(+) contacts are provided by residues 44-48 (DADYD), 93-94 (SL), and E127. K129 functions as the N6-AMP-lysine intermediate in the catalytic mechanism. The NAD(+) site is built by R150, E186, K302, and K326. Zn(2+) contacts are provided by C431, C434, C455, and C461. Positions 639-717 (ATDSPVAGKT…EDEWLALIGG (79 aa)) constitute a BRCT domain.

It belongs to the NAD-dependent DNA ligase family. LigA subfamily. Mg(2+) is required as a cofactor. The cofactor is Mn(2+).

The enzyme catalyses NAD(+) + (deoxyribonucleotide)n-3'-hydroxyl + 5'-phospho-(deoxyribonucleotide)m = (deoxyribonucleotide)n+m + AMP + beta-nicotinamide D-nucleotide.. Its function is as follows. DNA ligase that catalyzes the formation of phosphodiester linkages between 5'-phosphoryl and 3'-hydroxyl groups in double-stranded DNA using NAD as a coenzyme and as the energy source for the reaction. It is essential for DNA replication and repair of damaged DNA. The chain is DNA ligase from Rhizobium meliloti (strain 1021) (Ensifer meliloti).